Consider the following 342-residue polypeptide: Protein-ribulosamine 3-kinase, chloroplastic (342 aa).

Residues 1 to 46 (MANVALLSAASPSTSSAAPRLRHVARRRPSRRSACPRSAASRLSIM) constitute a chloroplast transit peptide. Residue 141-143 (EFI) coordinates ATP. D246 functions as the Proton acceptor in the catalytic mechanism.

The protein belongs to the fructosamine kinase family.

The protein localises to the plastid. It localises to the chloroplast. It carries out the reaction N(6)-D-ribulosyl-L-lysyl-[protein] + ATP = N(6)-(3-O-phospho-D-ribulosyl)-L-lysyl-[protein] + ADP + H(+). The enzyme catalyses N(6)-(D-erythrulosyl)-L-lysyl-[protein] + ATP = N(6)-(3-O-phospho-D-erythrulosyl)-L-lysyl-[protein] + ADP + H(+). In terms of biological role, initiates a process leading to the deglycation of proteins. Phosphorylates low-molecular-mass and protein-bound erythrulosamines and ribulosamines, but not fructosamines or psicosamines, on the third carbon of the sugar moiety. Protein-bound erythrulosamine 3-phosphates and ribulosamine 3-phosphates are unstable and decompose under physiological conditions. The chain is Protein-ribulosamine 3-kinase, chloroplastic from Oryza sativa subsp. japonica (Rice).